We begin with the raw amino-acid sequence, 352 residues long: Fe-S cluster assembly protein DRE2 (352 aa).

The span at 1-11 shows a compositional bias: polar residues; sequence MAPTAVYTQKD. A disordered region spans residues 1–24; that stretch reads MAPTAVYTQKDSPSSSQPSSKGPA. Residues 1–196 form an N-terminal SAM-like domain region; sequence MAPTAVYTQK…TVTSAPSVPL (196 aa). Residues 196–237 are linker; that stretch reads LLLRKRGDPAKKKALWALTTDASASPSTKIDADALLTAEDKA. 4 residues coordinate [2Fe-2S] cluster: cysteine 243, cysteine 257, cysteine 260, and cysteine 262. The tract at residues 243–262 is fe-S binding site A; the sequence is CAPVDRSAPRRKKACKNCSC. Residues cysteine 315, cysteine 318, cysteine 326, and cysteine 329 each coordinate [4Fe-4S] cluster. 2 short sequence motifs (cx2C motif) span residues 315 to 318 and 326 to 329; these read CGSC and CAGC. Residues 315–329 are fe-S binding site B; the sequence is CGSCFLGDAFRCAGC.

Belongs to the anamorsin family. As to quaternary structure, monomer. Interacts with TAH18. Interacts with MIA40. [2Fe-2S] cluster serves as cofactor. Requires [4Fe-4S] cluster as cofactor.

It is found in the cytoplasm. The protein localises to the mitochondrion intermembrane space. In terms of biological role, component of the cytosolic iron-sulfur (Fe-S) protein assembly (CIA) machinery required for the maturation of extramitochondrial Fe-S proteins. Part of an electron transfer chain functioning in an early step of cytosolic Fe-S biogenesis, facilitating the de novo assembly of a [4Fe-4S] cluster on the scaffold complex CFD1-NBP35. Electrons are transferred to DRE2 from NADPH via the FAD- and FMN-containing protein TAH18. TAH18-DRE2 are also required for the assembly of the diferric tyrosyl radical cofactor of ribonucleotide reductase (RNR), probably by providing electrons for reduction during radical cofactor maturation in the catalytic small subunit RNR2. This chain is Fe-S cluster assembly protein DRE2, found in Coprinopsis cinerea (strain Okayama-7 / 130 / ATCC MYA-4618 / FGSC 9003) (Inky cap fungus).